A 248-amino-acid chain; its full sequence is ATP synthase subunit a, chloroplastic (248 aa).

The next 4 membrane-spanning stretches (helical) occupy residues 34–54 (LHGQ…IFAL), 95–115 (VPYI…GALI), 134–154 (INVT…AGIS), and 203–223 (VFAL…GLFA).

Belongs to the ATPase A chain family. F-type ATPases have 2 components, CF(1) - the catalytic core - and CF(0) - the membrane proton channel. CF(1) has five subunits: alpha(3), beta(3), gamma(1), delta(1), epsilon(1). CF(0) has four main subunits: a, b, b' and c.

The protein localises to the plastid. It is found in the chloroplast thylakoid membrane. Functionally, key component of the proton channel; it plays a direct role in the translocation of protons across the membrane. The chain is ATP synthase subunit a, chloroplastic from Guillardia theta (Cryptophyte).